The primary structure comprises 580 residues: V-type proton ATPase catalytic subunit A (580 aa).

209-216 (GAFGCGKT) lines the ATP pocket.

The protein belongs to the ATPase alpha/beta chains family. As to quaternary structure, V-ATPase is a heteromultimeric enzyme composed of a peripheral catalytic V1 complex (main components: subunits A, B, C, D, E, and F) attached to an integral membrane V0 proton pore complex (main component: the proteolipid protein).

It catalyses the reaction ATP + H2O + 4 H(+)(in) = ADP + phosphate + 5 H(+)(out). In terms of biological role, catalytic subunit of the peripheral V1 complex of vacuolar ATPase. V-ATPase vacuolar ATPase is responsible for acidifying a variety of intracellular compartments in eukaryotic cells. This is V-type proton ATPase catalytic subunit A from Hordeum vulgare (Barley).